Consider the following 202-residue polypeptide: Homeobox protein ceh-13 (202 aa).

Disordered stretches follow at residues 60-83 (PATA…LPTG) and 166-202 (RMKE…KNFK). The segment covering 63–81 (ASGLSPPASRSSNSSAELP) has biased composition (low complexity). A DNA-binding region (homeobox) is located at residues 114–173 (NGTNRTNFTTHQLTELEKEFHTAKYVNRTRRTEIASNLKLQEAQVKIWFQNRRMKEKKRE). Positions 183 to 194 (TWESNSPTSSCS) are enriched in polar residues.

Its subcellular location is the nucleus. This chain is Homeobox protein ceh-13 (ceh-13), found in Caenorhabditis elegans.